The primary structure comprises 347 residues: Endo-1,4-beta-xylanase 3 (347 aa).

An N-terminal signal peptide occupies residues 1 to 16; the sequence is MKANVILCLLAPLVAA. The propeptide occupies 17–45; it reads LPTETIHLDPELAALRANLTERTADLWDR. Q46 bears the Pyrrolidone carboxylic acid mark. In terms of domain architecture, GH10 spans 46–345; that stretch reads QASQSIDQLI…KPAYNSIVGI (300 aa). E176 (proton donor) is an active-site residue. Catalysis depends on E282, which acts as the Nucleophile. A disulfide bridge connects residues C300 and C306.

It belongs to the glycosyl hydrolase 10 (cellulase F) family. As to quaternary structure, monomer. Not glycosylated.

It is found in the secreted. It catalyses the reaction Endohydrolysis of (1-&gt;4)-beta-D-xylosidic linkages in xylans.. The protein operates within glycan degradation; xylan degradation. Its function is as follows. Glycoside hydrolase involved in the hydrolysis of xylan, a major plant cell wall hemicellulose made up of 1,4-beta-linked D-xylopyranose residues. Catalyzes the endohydrolysis of the main-chain 1,4-beta-glycosidic bonds connecting the xylose subunits yielding various xylooligosaccharides and xylose. Produces xylobiose and xylotriose as the main degradation products. This is Endo-1,4-beta-xylanase 3 (xyn3) from Hypocrea jecorina (strain QM6a) (Trichoderma reesei).